A 247-amino-acid polypeptide reads, in one-letter code: Small ribosomal subunit protein uS2 (247 aa).

Belongs to the universal ribosomal protein uS2 family.

This Pseudomonas syringae pv. syringae (strain B728a) protein is Small ribosomal subunit protein uS2.